We begin with the raw amino-acid sequence, 44 residues long: Antimicrobial peptide 1b (44 aa).

Positions 1–42 (AQKCGEQGRGAKCPNCLCCGRYGFCGSTPDYCGVGCQSQCRG) constitute a Chitin-binding type-1 domain. Cystine bridges form between Cys4–Cys19, Cys13–Cys25, Cys16–Cys43, Cys18–Cys32, and Cys36–Cys40.

Post-translationally, contains 5 disulfide bonds.

Functionally, binds chitin. Has antifungal activity against F.oxysporum 16/10 (IC(50)=4.1 uM) and B.sorokiniana 6/10 (IC(50)=2.7 uM). Inhibits germination of fungal spores. In Leymus arenarius (Lyme grass), this protein is Antimicrobial peptide 1b.